Reading from the N-terminus, the 116-residue chain is U16-barytoxin-Tl1a (116 aa).

The signal sequence occupies residues 1-20 (MKTIIVFLSLLVLATKFGDA). Positions 21–74 (KEGVNQEQKKEVTQNEFRVEYLNEMAAMSLLQQLEAIESALFEKEAGRNSRQKR) are excised as a propeptide. 3 cysteine pairs are disulfide-bonded: cysteine 75-cysteine 90, cysteine 82-cysteine 95, and cysteine 89-cysteine 110.

Belongs to the neurotoxin 14 (magi-1) family. 06 (ICK-Trit) subfamily. In terms of tissue distribution, expressed by the venom gland.

The protein resides in the secreted. In terms of biological role, ion channel inhibitor. The chain is U16-barytoxin-Tl1a from Trittame loki (Brush-footed trapdoor spider).